The following is a 68-amino-acid chain: Neuronal regeneration-related protein (68 aa).

Positions glutamate 42–phenylalanine 68 are disordered.

As to quaternary structure, interacts with FLNA. Interacts with the latency-associated peptides (LAP) of TGFB1 and TGFB2; the interaction results in a decrease in TGFB autoinduction. In terms of processing, phosphorylated on Ser-59. Phosphorylation decreases stability and activity. Expressed in brain and fetal lung.

It localises to the cytoplasm. Functionally, may have roles in cellular differentiation. Ectopic expression induces differentiation of fibroblast into myofibroblast and myofibroblast ameboid migration. Increases retinoic-acid regulation of lipid-droplet biogenesis. May also have neural functions. Promotes axonal regeneration and augments motility of gliomas. Down-regulates the expression of TGFB1 and TGFB2 but not of TGFB3. May play a role in the regulation of alveolar generation. The protein is Neuronal regeneration-related protein (Nrep) of Mus musculus (Mouse).